The following is a 136-amino-acid chain: Probable flagellum biosynthesis repressor protein FlbT 2 (136 aa).

Belongs to the FlbT family.

Functionally, has a post-transcriptional repressor function in flagellum biogenesis. Associates with the 5'-UTR of fljK mRNA and promotes its degradation. The polypeptide is Probable flagellum biosynthesis repressor protein FlbT 2 (Bradyrhizobium diazoefficiens (strain JCM 10833 / BCRC 13528 / IAM 13628 / NBRC 14792 / USDA 110)).